The primary structure comprises 139 residues: Oocyte zinc finger protein XlCOF14 (139 aa).

C2H2-type zinc fingers lie at residues 6-28 (FICS…SNVH), 33-55 (FPCT…QKIH), 61-83 (HKCT…HLSH), 89-111 (FSCF…QLSH), and 117-139 (FVCS…CHIH).

It belongs to the krueppel C2H2-type zinc-finger protein family.

It localises to the nucleus. Functionally, may be involved in transcriptional regulation. This chain is Oocyte zinc finger protein XlCOF14, found in Xenopus laevis (African clawed frog).